A 370-amino-acid polypeptide reads, in one-letter code: Cytochrome b (370 aa).

The next 4 membrane-spanning stretches (helical) occupy residues 25-45 (FGSM…FLAV), 69-90 (WMMQ…YIHI), 105-125 (WLSG…GYVL), and 170-190 (FFAL…LHIL). Heme b is bound by residues His-75 and His-89. 2 residues coordinate heme b: His-174 and His-188. His-193 contributes to the a ubiquinone binding site. 4 consecutive transmembrane segments (helical) span residues 218–238 (YKDM…VSFF), 280–300 (LGGA…PFTH), 312–332 (LMQL…WTAT), and 339–358 (FTTI…ISNP).

This sequence belongs to the cytochrome b family. The cytochrome bc1 complex contains 3 respiratory subunits (MT-CYB, CYC1 and UQCRFS1), 2 core proteins (UQCRC1 and UQCRC2) and probably 6 low-molecular weight proteins. It depends on heme b as a cofactor.

The protein localises to the mitochondrion inner membrane. Component of the ubiquinol-cytochrome c reductase complex (complex III or cytochrome b-c1 complex) that is part of the mitochondrial respiratory chain. The b-c1 complex mediates electron transfer from ubiquinol to cytochrome c. Contributes to the generation of a proton gradient across the mitochondrial membrane that is then used for ATP synthesis. This is Cytochrome b (MT-CYB) from Chilabothrus striatus (Haitian boa constrictor).